A 352-amino-acid polypeptide reads, in one-letter code: Ion-translocating oxidoreductase complex subunit D (352 aa).

The next 5 membrane-spanning stretches (helical) occupy residues 20-40, 42-62, 78-109, 123-143, and 148-168; these read IMLL…RFFG, GTLV…ALVL, ALLT…VIIA, PAMI…TSWL, and IAVN…GHTA. Threonine 187 carries the FMN phosphoryl threonine modification. Transmembrane regions (helical) follow at residues 214–234, 242–262, 267–287, and 301–318; these read ILAG…GVWL, WHIP…GWLF, LAAP…FFIL, and LMFG…RSFG.

It belongs to the NqrB/RnfD family. The complex is composed of six subunits: RsxA, RsxB, RsxC, RsxD, RsxE and RsxG. FMN serves as cofactor.

It is found in the cell inner membrane. Part of a membrane-bound complex that couples electron transfer with translocation of ions across the membrane. Required to maintain the reduced state of SoxR. In Shigella flexneri, this protein is Ion-translocating oxidoreductase complex subunit D.